The following is an 81-amino-acid chain: Trefoil factor 3 (81 aa).

The signal sequence occupies residues 1–23; sequence MEARTFWLLVVAVLALGSSSSTG. Residues 31–74 enclose the P-type domain; sequence NQCAVPAKDRVDCGYPEVTPEQCNNRGCCFDSSIHGVPWCFKPL. Intrachain disulfides connect C33–C59, C43–C58, and C53–C70.

In terms of assembly, monomer. Homodimer; disulfide-linked.

It localises to the secreted. Its subcellular location is the extracellular space. The protein resides in the extracellular matrix. It is found in the cytoplasm. In terms of biological role, involved in the maintenance and repair of the intestinal mucosa. Promotes the mobility of epithelial cells in healing processes (motogen). The polypeptide is Trefoil factor 3 (TFF3) (Bos taurus (Bovine)).